Consider the following 238-residue polypeptide: MRPSGRAADQMRPIAIETNFTIHAEGSVLVSFGNTRVLVTASVEEKVPPFLRGKGQGWVTAEYGMLPRATHTRGSREAAKGKQSGRTQEIQRLIGRSLRAVVDMQKLGERQIVIDCDVIQADGGTRTASISGAWVALRLAVDKLIEAKQLTEDPIVDSVAAISCGIYKGTPVLDLDYDEDSVAEADGNFVLTGKGQIVEVQASAEGATYDEEGLLRLLRLARIGCGEIFAAQAKAVGR.

Phosphate-binding positions include Arg-86 and 124–126 (GTR).

The protein belongs to the RNase PH family. As to quaternary structure, homohexameric ring arranged as a trimer of dimers.

It carries out the reaction tRNA(n+1) + phosphate = tRNA(n) + a ribonucleoside 5'-diphosphate. In terms of biological role, phosphorolytic 3'-5' exoribonuclease that plays an important role in tRNA 3'-end maturation. Removes nucleotide residues following the 3'-CCA terminus of tRNAs; can also add nucleotides to the ends of RNA molecules by using nucleoside diphosphates as substrates, but this may not be physiologically important. Probably plays a role in initiation of 16S rRNA degradation (leading to ribosome degradation) during starvation. This is Ribonuclease PH from Sphingopyxis alaskensis (strain DSM 13593 / LMG 18877 / RB2256) (Sphingomonas alaskensis).